The primary structure comprises 222 residues: LHFPL tetraspan subfamily member 3 protein (222 aa).

A run of 4 helical transmembrane segments spans residues 22-42, 96-116, 126-146, and 177-197; these read IGVL…VCFI, FFIG…TLFF, ICAW…MIFP, and ILAI…VVLG.

The protein belongs to the LHFP family. Brain-specific.

Its subcellular location is the membrane. This Mus musculus (Mouse) protein is LHFPL tetraspan subfamily member 3 protein.